Reading from the N-terminus, the 1007-residue chain is Protein vav-1 (1007 aa).

Positions Cys37–Glu151 constitute a Calponin-homology (CH) domain. The tract at residues Glu151 to Leu239 is AC. The segment at Leu153–Phe176 is disordered. The segment covering Thr163–Ser174 has biased composition (polar residues). Phosphotyrosine occurs at positions 183, 200, and 217. One can recognise a DH domain in the interval Lys240 to Glu437. Positions Arg470 to Ser598 constitute a PH domain. The segment at Asn610–Ala664 adopts a Phorbol-ester/DAG-type zinc-finger fold. Positions His688–Thr750 constitute an SH3 1 domain. The disordered stretch occupies residues Leu778 to Arg817. Positions Leu782–Ser814 are enriched in low complexity. Residues Trp831–Tyr925 enclose the SH2 domain. The SH3 2 domain maps to Ser926 to Pro991.

Post-translationally, GEF activity is regulated by phosphorylation on tyrosine residues. In terms of tissue distribution, strong expression in the pharynx, proximal gonad, spermatheca, intestine and rectal epithelia.

Its function is as follows. Acts as a guanine nucleotide exchange factor (GEF) for Rho GTPase. Has a critical roles in the generation of rhythmic behaviors: feeding, defecation and ovulation by dynamically regulating the concentration of intracellular calcium. Plays a role in male tail tip morphogenesis. The sequence is that of Protein vav-1 from Caenorhabditis elegans.